A 165-amino-acid polypeptide reads, in one-letter code: Destrin (165 aa).

An N-acetylalanine modification is found at A2. Position 3 is a phosphoserine (S3). An ADF-H domain is found at G4 to G153. At K19 the chain carries N6-acetyllysine. Residues K30–K34 carry the Nuclear localization signal motif.

It belongs to the actin-binding proteins ADF family. In terms of processing, ISGylated.

Actin-depolymerizing protein. Severs actin filaments (F-actin) and binds to actin monomers (G-actin). Acts in a pH-independent manner. The polypeptide is Destrin (Dstn) (Rattus norvegicus (Rat)).